The sequence spans 236 residues: Lectin alpha chain (236 aa).

Mn(2+) is bound by residues glutamate 8 and aspartate 10. Positions 10, 12, 14, and 19 each coordinate Ca(2+). Tyrosine 12 contributes to the a carbohydrate binding site. Mn(2+) contacts are provided by aspartate 19, histidine 24, and serine 34. 99 to 100 provides a ligand contact to a carbohydrate; the sequence is LY. Residue aspartate 207 coordinates Ca(2+). A carbohydrate is bound at residue arginine 227.

Belongs to the leguminous lectin family. As to quaternary structure, equilibrium between homodimer and homotetramer. Oligomerization is pH-dependent with homotetramers forming at pH 6.5 and above. The beta and gamma chains are produced by partial proteolytic processing of the lectin alpha chain by an asparaginyl endopeptidase. Mixture of 60% alpha lectin and 40% of its beta and gamma proteolytic fragments. In terms of tissue distribution, seed.

D-mannose/D-glucose-binding lectin. Has anti-inflammatory activity in rats. Induces histamine release in mast cells from rat. Induces lymphocyte proliferation and IFNG production. The protein is Lectin alpha chain of Cratylia argentea (Cratylia floribunda).